Here is a 505-residue protein sequence, read N- to C-terminus: Activin receptor type-1B (505 aa).

A signal peptide spans 1-23 (MAESAGASSFFPLVVLLLAGSGG). Residues 24–126 (SGPRGIQALL…AHPSMWGPVE (103 aa)) are Extracellular-facing. Asn43 carries N-linked (GlcNAc...) asparagine glycosylation. The helical transmembrane segment at 127–149 (LVGIIAGPVFLLFLIIIIVFLVI) threads the bilayer. The Cytoplasmic portion of the chain corresponds to 150–505 (NYHQRVYHNR…QLSVQEDVKI (356 aa)). One can recognise a GS domain in the interval 177–206 (KTLQDLVYDLSTSGSGSGLPLFVQRTVART). One can recognise a Protein kinase domain in the interval 207–497 (IVLQEIIGKG…LRIKKTLSQL (291 aa)). ATP-binding positions include 213–221 (IGKGRFGEV) and Lys234. Catalysis depends on Asp335, which acts as the Proton acceptor. The residue at position 380 (Tyr380) is a Phosphotyrosine.

Belongs to the protein kinase superfamily. TKL Ser/Thr protein kinase family. TGFB receptor subfamily. Forms an activin receptor complex with activin receptor type-2 (ACVR2A or ACVR2B). Part of a complex consisting of MAGI2/ARIP1, ACVR2A, ACVR1B and SMAD3. Interacts with SMAD2 and SMAD3. Interacts with SMAD7. Interacts with FKBP1A. Interacts with IGSF1. Interacts with CRIPTO. Interacts with TDP2. Interacts with TSC22D1/TSC-22. Post-translationally, autophosphorylated. Phosphorylated by activin receptor type-2 (ACVR2A or ACVR2B) in response to activin-binding at serine and threonine residues in the GS domain. Phosphorylation of ACVR1B by activin receptor type-2 regulates association with SMAD7. Ubiquitinated. Level of ubiquitination is regulated by the SMAD7-SMURF1 complex. In terms of processing, ubiquitinated.

The protein resides in the cell membrane. It catalyses the reaction L-threonyl-[receptor-protein] + ATP = O-phospho-L-threonyl-[receptor-protein] + ADP + H(+). The catalysed reaction is L-seryl-[receptor-protein] + ATP = O-phospho-L-seryl-[receptor-protein] + ADP + H(+). Activin receptor type-2 (ACVR2A or ACVR2B) activates the type-1 receptor through phosphorylation of its regulatory GS domain. In terms of biological role, transmembrane serine/threonine kinase activin type-1 receptor forming an activin receptor complex with activin receptor type-2 (ACVR2A or ACVR2B). Transduces the activin signal from the cell surface to the cytoplasm and is thus regulating a many physiological and pathological processes including neuronal differentiation and neuronal survival, hair follicle development and cycling, FSH production by the pituitary gland, wound healing, extracellular matrix production, immunosuppression and carcinogenesis. Activin is also thought to have a paracrine or autocrine role in follicular development in the ovary. Within the receptor complex, type-2 receptors (ACVR2A and/or ACVR2B) act as a primary activin receptors whereas the type-1 receptors like ACVR1B act as downstream transducers of activin signals. Activin binds to type-2 receptor at the plasma membrane and activates its serine-threonine kinase. The activated receptor type-2 then phosphorylates and activates the type-1 receptor such as ACVR1B. Once activated, the type-1 receptor binds and phosphorylates the SMAD proteins SMAD2 and SMAD3, on serine residues of the C-terminal tail. Soon after their association with the activin receptor and subsequent phosphorylation, SMAD2 and SMAD3 are released into the cytoplasm where they interact with the common partner SMAD4. This SMAD complex translocates into the nucleus where it mediates activin-induced transcription. Inhibitory SMAD7, which is recruited to ACVR1B through FKBP1A, can prevent the association of SMAD2 and SMAD3 with the activin receptor complex, thereby blocking the activin signal. Activin signal transduction is also antagonized by the binding to the receptor of inhibin-B via the IGSF1 inhibin coreceptor. ACVR1B also phosphorylates TDP2. The sequence is that of Activin receptor type-1B (Acvr1b) from Mus musculus (Mouse).